Reading from the N-terminus, the 376-residue chain is 3-aminomethylindole N-methyltransferase (376 aa).

G220, D243, D263, and M264 together coordinate S-adenosyl-L-homocysteine.

It belongs to the class I-like SAM-binding methyltransferase superfamily. Cation-independent O-methyltransferase family. As to expression, more present in the fifth leaf than in the second leaf (at protein level).

The enzyme catalyses 3-(aminomethyl)indole + 2 S-adenosyl-L-methionine = gramine + 2 S-adenosyl-L-homocysteine + 2 H(+). It functions in the pathway alkaloid biosynthesis. Repressed by sodium carbonate, sodium bicarbonate and K-phosphate. In terms of biological role, methylates 3-aminomethylindole (AMI) and N-methyl-3-aminomethylindole (MAMI), two substrates involved in gramine biosynthesis, a toxic indole alkaloid. Can use S-adenosyl-L-methionine (AdoMet) as a methyl donor. Unable to mediate caffeic acid O-methylation. The protein is 3-aminomethylindole N-methyltransferase of Hordeum vulgare subsp. vulgare (Domesticated barley).